A 362-amino-acid chain; its full sequence is UDP-N-acetylglucosamine--N-acetylmuramyl-(pentapeptide) pyrophosphoryl-undecaprenol N-acetylglucosamine transferase (362 aa).

UDP-N-acetyl-alpha-D-glucosamine contacts are provided by residues 15–17, Asn-127, Arg-165, Ser-191, Ile-247, 266–271, and Gln-292; these read TGG and ALTVSE.

This sequence belongs to the glycosyltransferase 28 family. MurG subfamily.

It is found in the cell inner membrane. The enzyme catalyses di-trans,octa-cis-undecaprenyl diphospho-N-acetyl-alpha-D-muramoyl-L-alanyl-D-glutamyl-meso-2,6-diaminopimeloyl-D-alanyl-D-alanine + UDP-N-acetyl-alpha-D-glucosamine = di-trans,octa-cis-undecaprenyl diphospho-[N-acetyl-alpha-D-glucosaminyl-(1-&gt;4)]-N-acetyl-alpha-D-muramoyl-L-alanyl-D-glutamyl-meso-2,6-diaminopimeloyl-D-alanyl-D-alanine + UDP + H(+). It participates in cell wall biogenesis; peptidoglycan biosynthesis. Functionally, cell wall formation. Catalyzes the transfer of a GlcNAc subunit on undecaprenyl-pyrophosphoryl-MurNAc-pentapeptide (lipid intermediate I) to form undecaprenyl-pyrophosphoryl-MurNAc-(pentapeptide)GlcNAc (lipid intermediate II). In Shewanella sp. (strain MR-4), this protein is UDP-N-acetylglucosamine--N-acetylmuramyl-(pentapeptide) pyrophosphoryl-undecaprenol N-acetylglucosamine transferase.